We begin with the raw amino-acid sequence, 151 residues long: Gametocyte-specific factor 1-like (151 aa).

2 consecutive CHHC U11-48K-type zinc fingers follow at residues 6 to 33 and 40 to 67; these read IEIC…RKKN and MASC…VNRS. Zn(2+) is bound by residues C9, H15, H25, C29, C43, H49, H59, and C63. The tract at residues 130 to 151 is disordered; sequence QESRGGDQCPEDPQTRTRKANF.

This sequence belongs to the UPF0224 (FAM112) family.

The protein is Gametocyte-specific factor 1-like (Gtsf1l) of Mus musculus (Mouse).